Reading from the N-terminus, the 145-residue chain is 3-dehydroquinate dehydratase (145 aa).

The active-site Proton acceptor is the Y22. Positions 71, 77, and 84 each coordinate substrate. The Proton donor role is filled by H97. Substrate is bound by residues 98–99 (LS) and R108.

Belongs to the type-II 3-dehydroquinase family. Homododecamer.

It carries out the reaction 3-dehydroquinate = 3-dehydroshikimate + H2O. The protein operates within metabolic intermediate biosynthesis; chorismate biosynthesis; chorismate from D-erythrose 4-phosphate and phosphoenolpyruvate: step 3/7. In terms of biological role, catalyzes a trans-dehydration via an enolate intermediate. This is 3-dehydroquinate dehydratase from Francisella tularensis subsp. mediasiatica (strain FSC147).